A 367-amino-acid polypeptide reads, in one-letter code: tRNA-specific 2-thiouridylase MnmA (367 aa).

ATP is bound by residues 13-20 (GLSGGVDS) and Met-39. Residues 99 to 101 (NPD) are interaction with target base in tRNA. Cys-104 functions as the Nucleophile in the catalytic mechanism. Cys-104 and Cys-200 are disulfide-bonded. Gly-128 contributes to the ATP binding site. The interaction with tRNA stretch occupies residues 150–152 (KDQ). Cys-200 functions as the Cysteine persulfide intermediate in the catalytic mechanism. The segment at 307 to 308 (RY) is interaction with tRNA.

It belongs to the MnmA/TRMU family.

Its subcellular location is the cytoplasm. It catalyses the reaction S-sulfanyl-L-cysteinyl-[protein] + uridine(34) in tRNA + AH2 + ATP = 2-thiouridine(34) in tRNA + L-cysteinyl-[protein] + A + AMP + diphosphate + H(+). Its function is as follows. Catalyzes the 2-thiolation of uridine at the wobble position (U34) of tRNA, leading to the formation of s(2)U34. The polypeptide is tRNA-specific 2-thiouridylase MnmA (Neisseria meningitidis serogroup B (strain ATCC BAA-335 / MC58)).